Reading from the N-terminus, the 371-residue chain is Peptide chain release factor 2 (371 aa).

Glutamine 253 carries the post-translational modification N5-methylglutamine.

Belongs to the prokaryotic/mitochondrial release factor family. In terms of processing, methylated by PrmC. Methylation increases the termination efficiency of RF2.

The protein localises to the cytoplasm. Its function is as follows. Peptide chain release factor 2 directs the termination of translation in response to the peptide chain termination codons UGA and UAA. This chain is Peptide chain release factor 2, found in Mycobacterium ulcerans (strain Agy99).